We begin with the raw amino-acid sequence, 244 residues long: Phosphoadenosine 5'-phosphosulfate reductase (244 aa).

Cys239 (nucleophile; cysteine thiosulfonate intermediate) is an active-site residue.

Belongs to the PAPS reductase family. CysH subfamily.

The protein localises to the cytoplasm. It carries out the reaction [thioredoxin]-disulfide + sulfite + adenosine 3',5'-bisphosphate + 2 H(+) = [thioredoxin]-dithiol + 3'-phosphoadenylyl sulfate. Its pathway is sulfur metabolism; hydrogen sulfide biosynthesis; sulfite from sulfate: step 3/3. Functionally, catalyzes the formation of sulfite from phosphoadenosine 5'-phosphosulfate (PAPS) using thioredoxin as an electron donor. The protein is Phosphoadenosine 5'-phosphosulfate reductase of Salmonella heidelberg (strain SL476).